An 878-amino-acid chain; its full sequence is Multiple C2 and transmembrane domain-containing protein 2 (878 aa).

2 disordered regions span residues 20 to 40 and 143 to 178; these read LINL…DLRV and KPSL…ESTL. Positions 149 to 161 are enriched in basic and acidic residues; it reads DAPEEHDKTHGND. C2 domains are found at residues 177–292, 334–452, and 486–607; these read TLGE…EHIL, SKSS…CLEL, and PSER…CYVL. Residues Asp210, Asp216, Asp263, Asp265, and Asp270 each contribute to the Ca(2+) site. Positions 525, 531, 577, 579, and 585 each coordinate Ca(2+). The chain crosses the membrane as a helical span at residues 694 to 714; that stretch reads FVVFLVTVWNFELYMIPLALL. The segment at 728 to 752 is disordered; the sequence is KASSTQDSQESTDVEEEGKEEEKES. Over residues 737–746 the composition is skewed to acidic residues; sequence ESTDVEEEGK. A helical membrane pass occupies residues 794-814; that stretch reads PFLSLLACLILAITTVILYFI.

This sequence belongs to the MCTP family. Requires Ca(2+) as cofactor.

Its subcellular location is the membrane. Functionally, might play a role in the development of cardiac outflow tract. The chain is Multiple C2 and transmembrane domain-containing protein 2 (Mctp2) from Mus musculus (Mouse).